We begin with the raw amino-acid sequence, 348 residues long: Dihydroorotase (348 aa).

Positions 17 and 19 each coordinate Zn(2+). Substrate is bound by residues His19 to Arg21 and Asn45. Zn(2+) contacts are provided by Lys103, His140, and His178. Lys103 is subject to N6-carboxylysine. His140 contributes to the substrate binding site. Leu223 contacts substrate. Residue Asp251 participates in Zn(2+) binding. Asp251 is a catalytic residue. Positions 255 and 267 each coordinate substrate.

It belongs to the metallo-dependent hydrolases superfamily. DHOase family. Class II DHOase subfamily. In terms of assembly, homodimer. Zn(2+) is required as a cofactor.

It carries out the reaction (S)-dihydroorotate + H2O = N-carbamoyl-L-aspartate + H(+). It participates in pyrimidine metabolism; UMP biosynthesis via de novo pathway; (S)-dihydroorotate from bicarbonate: step 3/3. Functionally, catalyzes the reversible cyclization of carbamoyl aspartate to dihydroorotate. The protein is Dihydroorotase of Serratia proteamaculans (strain 568).